A 206-amino-acid polypeptide reads, in one-letter code: Potassium channel B446_29190 (206 aa).

M1 is a topological domain (cytoplasmic). A helical membrane pass occupies residues 2 to 25 (NESGRVEAFSDGVFAIAITLLILD). The short motif at 6-12 (RVEAFSD) is the RxxxFSD motif element. The Extracellular segment spans residues 26–44 (IKVPKADGPGGLWHALGAQ). The tract at residues 31 to 34 (ADGP) is short helix H1. Residues 36 to 42 (GLWHALG) are short helix H2. The chain crosses the membrane as a helical span at residues 45 to 70 (WPSYAAYVVSFLVIGIMWVNHHQVFS). Topologically, residues 71–76 (YVARVD) are cytoplasmic. The helical transmembrane segment at 77–102 (RALMFLNLLVLMVVAAVPWPTAMLAE) threads the bilayer. The Extracellular segment spans residues 103-110 (YLREDRAS). A helical transmembrane segment spans residues 111 to 135 (HVAAAVYSLVMVAMALAFQALWWHL). The Cytoplasmic segment spans residues 136 to 147 (TRTGHLFDPRVD). Residues 148–174 (APAARATRIRFALGSLGYPLTVGLAFV) traverse the membrane as a helical segment. At 175-176 (SA) the chain is on the extracellular side. A helical membrane pass occupies residues 177–192 (PLTLAAHGLLALYYGF). At 193-206 (NQVPVPTREAAAPS) the chain is on the cytoplasmic side.

The protein belongs to the TMEM175 family. Homotetramer.

It is found in the membrane. The catalysed reaction is K(+)(in) = K(+)(out). Functionally, potassium channel. This chain is Potassium channel B446_29190, found in Streptomyces collinus (strain DSM 40733 / Tue 365).